The sequence spans 151 residues: Large ribosomal subunit protein uL15 (151 aa).

The interval 1–45 (MNLSSLKPVKGSTKTCKRVGRGQGSGCGGTSTRGHKGQKSRSGYS) is disordered. The segment covering 21–31 (RGQGSGCGGTS) has biased composition (gly residues).

This sequence belongs to the universal ribosomal protein uL15 family. In terms of assembly, part of the 50S ribosomal subunit.

Functionally, binds to the 23S rRNA. In Azobacteroides pseudotrichonymphae genomovar. CFP2, this protein is Large ribosomal subunit protein uL15.